Here is a 416-residue protein sequence, read N- to C-terminus: Trifolitoxin-processing protein TfxD (416 aa).

The next 11 helical transmembrane spans lie at 24 to 44 (MIPNVADTIVVTLIGATALQV), 48 to 68 (VLITILTLNIAFLNFCSLICM), 79 to 99 (VFAAIVRAACMMIGVYLALIA), 114 to 134 (IAFIALSALRPFVAGWNAYCA), 153 to 173 (SSLIYAGVNLLFVGLSHFAGT), 176 to 196 (SIISLLIGVYLALFHNALAYA), 230 to 250 (ASFINMLEMGFLALVGWVVAA), 255 to 275 (IAVFYFPFFTLVELTSGLAIG), 295 to 315 (VLIAVYSTYSLLCFLIYVGLI), 322 to 342 (IFALPLSLAGLALLFLICDGL), and 372 to 392 (VILALAAVLGSVQALAIALVL).

It is found in the cell membrane. Functionally, the actions of the proteins TfxB, TfxD and TfxF are implicated in the processing of the inactive trifolitoxin (TfxA) precursor into the active peptide. The sequence is that of Trifolitoxin-processing protein TfxD (tfxD) from Rhizobium leguminosarum bv. trifolii.